Consider the following 242-residue polypeptide: Stress response regulator protein 1 (242 aa).

A Response regulatory domain is found at 118 to 236; sequence NFLLVDDNFI…FDHIITCIEK (119 aa). Residue Asp-169 is modified to 4-aspartylphosphate.

Required for stress adaptation, morphogenesis and virulence. The sequence is that of Stress response regulator protein 1 (SRR1) from Debaryomyces hansenii (strain ATCC 36239 / CBS 767 / BCRC 21394 / JCM 1990 / NBRC 0083 / IGC 2968) (Yeast).